The primary structure comprises 293 residues: ATP synthase gamma chain (293 aa).

Belongs to the ATPase gamma chain family. In terms of assembly, F-type ATPases have 2 components, CF(1) - the catalytic core - and CF(0) - the membrane proton channel. CF(1) has five subunits: alpha(3), beta(3), gamma(1), delta(1), epsilon(1). CF(0) has three main subunits: a, b and c.

The protein localises to the cell inner membrane. In terms of biological role, produces ATP from ADP in the presence of a proton gradient across the membrane. The gamma chain is believed to be important in regulating ATPase activity and the flow of protons through the CF(0) complex. In Chlorobium chlorochromatii (strain CaD3), this protein is ATP synthase gamma chain.